The following is a 629-amino-acid chain: MHFHERFDVIVVGGGHAGTEAALASARMGSKTLLLTHNIDTLGQMSCNPAIGGIGKGHLVKEIDALGGAMAIATDYAGIQFRTLNSSKGPAVRATRAQADRALYRHKIQEILQHQPNLRIFQQAVDDLVVENETVVGVVTQMGLAFEAPAVVLTTGTFLSGKIHIGLENYSGGRAGDPPAIALAHRLQELPIRVGRLKTGTPPRIDANTIDFSKMTEQKGDDPLPVMSFIGDVNQHPEQVSCHITHTNERTHDIIRAGLDRSPMYSGVIEGIGPRYCPSIEDKINRFADKNSHQIFIEPEGLNTTEIYPNGISTSLPFDVQLNLVRSIKGMENAEIMRPGYAIEYDYFDPRDLKNSLETKTINGLFFAGQINGTTGYEEAGAQGLLAGMNASLQIQGKETWCPRRDQAYLGVLVDDLSTLGTKEPYRMFTSRAEYRLLLREDNADLRLTEKGRELGLVDDERWAKFSDKMESIETELQRLRSQWIHPRSPLVDVLNPHLKTPIAREATFEDLLRRPELDYPTLMSIDGFGPGIDDQRAAEQVQIQVKYSGYIQRQQDEIDKAIRHETTGLPLDLDYQEVPGLSNEVIAKMNEHKPETVGQASRISGMTPAAISILLVHLKKRGLLRKSA.

13–18 (GGGHAG) contacts FAD. 273 to 287 (GPRYCPSIEDKINRF) is a binding site for NAD(+).

The protein belongs to the MnmG family. In terms of assembly, homodimer. Heterotetramer of two MnmE and two MnmG subunits. The cofactor is FAD.

Its subcellular location is the cytoplasm. Functionally, NAD-binding protein involved in the addition of a carboxymethylaminomethyl (cmnm) group at the wobble position (U34) of certain tRNAs, forming tRNA-cmnm(5)s(2)U34. This chain is tRNA uridine 5-carboxymethylaminomethyl modification enzyme MnmG, found in Shewanella piezotolerans (strain WP3 / JCM 13877).